Consider the following 89-residue polypeptide: uncharacterized protein (89 aa).

A helical transmembrane segment spans residues 28 to 50 (LYLDLGFSALLFYNSNLLFSFIL).

It is found in the membrane. This is an uncharacterized protein from Archaeoglobus fulgidus (strain ATCC 49558 / DSM 4304 / JCM 9628 / NBRC 100126 / VC-16).